The following is a 349-amino-acid chain: 5-deoxyribose 1-phosphate isomerase (349 aa).

Residues 49-51, arginine 92, and glutamine 199 contribute to the substrate site; that span reads RGA. The Proton donor role is filled by aspartate 240. 250 to 251 provides a ligand contact to substrate; the sequence is NK.

Belongs to the EIF-2B alpha/beta/delta subunits family. DrdI subfamily.

It catalyses the reaction 5-deoxy-alpha-D-ribose 1-phosphate = 5-deoxy-D-ribulose 1-phosphate. Its pathway is carbohydrate degradation. Its function is as follows. Catalyzes the isomerization of 5-deoxy-alpha-D-ribose 1-phosphate to 5-deoxy-D-ribulose 1-phosphate, as part of a 5-deoxyribose salvage pathway that recycles this toxic radical SAM enzyme by-product to mainstream metabolites. The polypeptide is 5-deoxyribose 1-phosphate isomerase (Clostridium botulinum (strain 657 / Type Ba4)).